Here is a 227-residue protein sequence, read N- to C-terminus: Probable methylthioribulose-1-phosphate dehydratase (227 aa).

C87 provides a ligand contact to substrate. Positions 105 and 107 each coordinate Zn(2+). E129 serves as the catalytic Proton donor/acceptor. H185 lines the Zn(2+) pocket.

This sequence belongs to the aldolase class II family. MtnB subfamily. It depends on Zn(2+) as a cofactor.

The protein resides in the cytoplasm. The catalysed reaction is 5-(methylsulfanyl)-D-ribulose 1-phosphate = 5-methylsulfanyl-2,3-dioxopentyl phosphate + H2O. It functions in the pathway amino-acid biosynthesis; L-methionine biosynthesis via salvage pathway; L-methionine from S-methyl-5-thio-alpha-D-ribose 1-phosphate: step 2/6. Catalyzes the dehydration of methylthioribulose-1-phosphate (MTRu-1-P) into 2,3-diketo-5-methylthiopentyl-1-phosphate (DK-MTP-1-P). The chain is Probable methylthioribulose-1-phosphate dehydratase from Drosophila mojavensis (Fruit fly).